Here is a 321-residue protein sequence, read N- to C-terminus: Ferredoxin--NADP reductase (321 aa).

Residues aspartate 28, glutamine 36, tyrosine 41, alanine 81, phenylalanine 115, aspartate 274, and serine 315 each contribute to the FAD site.

Belongs to the ferredoxin--NADP reductase type 2 family. In terms of assembly, homodimer. It depends on FAD as a cofactor.

The catalysed reaction is 2 reduced [2Fe-2S]-[ferredoxin] + NADP(+) + H(+) = 2 oxidized [2Fe-2S]-[ferredoxin] + NADPH. The sequence is that of Ferredoxin--NADP reductase from Frankia alni (strain DSM 45986 / CECT 9034 / ACN14a).